Consider the following 1663-residue polypeptide: Kotanin synthase (1663 aa).

Residues 19–168 (RPHEFSFNTQ…PLPVYGGPCH (150 aa)) form an N-terminal acylcarrier protein transacylase domain (SAT) region. Residues 301 to 731 (DSRIAVVGMS…GGNTSLLLEE (431 aa)) form the Ketosynthase family 3 (KS3) domain. Active-site for beta-ketoacyl synthase activity residues include Cys474, His609, and His650. The malonyl-CoA:ACP transacylase (MAT) domain stretch occupies residues 830-1149 (FIFSGQGSFY…SMCTLQETGV (320 aa)). A product template (PT) domain region spans residues 1209-1527 (TALVHQIMEE…PRILMNRFFD (319 aa)). The N-terminal hotdog fold stretch occupies residues 1213-1349 (HQIMEESFRP…GVVRCGDRQS (137 aa)). Residues 1213-1523 (HQIMEESFRP…LRPLPRILMN (311 aa)) enclose the PKS/mFAS DH domain. Residue His1245 is the Proton acceptor; for dehydratase activity of the active site. The segment at 1376–1523 (QASRVSRDLV…LRPLPRILMN (148 aa)) is C-terminal hotdog fold. Asp1434 serves as the catalytic Proton donor; for dehydratase activity. The tract at residues 1544–1580 (DLPQVQHQPSPTTDSGPDDDPKDPNTGPLTPEVDLPV) is disordered. The 78-residue stretch at 1586–1663 (KANTKLVRGA…ELKEYLTASW (78 aa)) folds into the Carrier domain. Ser1623 is modified (O-(pantetheine 4'-phosphoryl)serine).

Requires pantetheine 4'-phosphate as cofactor.

Its pathway is secondary metabolite biosynthesis. In terms of biological role, non-reducing polyketide synthase; part of the gene cluster that mediates the biosynthesis of the bicoumarin kotanin. The non-reducing polyketide synthase ktnS first catalyzes the formation of the pentaketidic 4,7-dihydroxy-5-methylcoumarin from acetyl coenzyme A and 4 malonyl coenzyme A molecules. Further O-methylation by ktnB leads to the formation of 7-demethylsiderin. Then, an oxidative phenol coupling catalyzed by the cytochrome P450 monooxygenase ktnC forms the 8,8'-dimer P-orlandin via dimerization the monomeric precursor, 7-demethylsiderin. P-orlandin is subsequently O-methylated in a stepwise fashion to demethylkotanin and kotanin. In Aspergillus niger (strain ATCC MYA-4892 / CBS 513.88 / FGSC A1513), this protein is Kotanin synthase.